Reading from the N-terminus, the 283-residue chain is Acetylglutamate kinase (283 aa).

Substrate contacts are provided by residues 64–65 (GG), Arg86, and Asn178.

It belongs to the acetylglutamate kinase family. ArgB subfamily.

It localises to the cytoplasm. It catalyses the reaction N-acetyl-L-glutamate + ATP = N-acetyl-L-glutamyl 5-phosphate + ADP. It participates in amino-acid biosynthesis; L-arginine biosynthesis; N(2)-acetyl-L-ornithine from L-glutamate: step 2/4. Catalyzes the ATP-dependent phosphorylation of N-acetyl-L-glutamate. This Lactococcus lactis subsp. cremoris (strain MG1363) protein is Acetylglutamate kinase.